Consider the following 1543-residue polypeptide: ATP-binding cassette sub-family A member 10 (1543 aa).

Helical transmembrane passes span 83–103 (YWLKGFVAFQAAINAAIIEVT), 135–155 (WFHFTCLVSFSSFIYFASLNV), 185–205 (ICFIFIMSIFMALVITSIPIV), 210–230 (FMVIFTLYSLYGLSLIALAFL), 240–260 (LAGLAGFLFTVFWGCLGFTVL), 264–284 (LPLSLGWVLSLLSPFAFTAGM), and 310–330 (IATFFILAFDTLFYLIFTLYF). Residues 391–626 (IRIRNVIKEY…WGIGYHLSLH (236 aa)) form the ABC transporter 1 domain. 427 to 434 (GHNGAGKS) is an ATP binding site. The next 8 helical transmembrane spans lie at 774–794 (LLCLLLVLGIAFIPIILEKIM), 890–910 (LNCFPVLMGIVSNALMGIFNF), 926–946 (IVLDLGFIDGSIFLLLITNCV), 985–1005 (IPLYFLILFSIHLIYYFIFLG), 1014–1034 (FVLVVCIIGCAVSLIFLTYVL), 1046–1066 (GFWSFGFFIILICVSTIMVST), 1073–1093 (LILCMIFIPSFTLLGYVMLLI), and 1113–1133 (KTILLTTLIPYLQSVIFLFVI). Positions 1153–1164 (ISPRSRETHPNP) are enriched in basic and acidic residues. The interval 1153–1177 (ISPRSRETHPNPEEPEEEDEDVQAE) is disordered. Over residues 1165 to 1174 (EEPEEEDEDV) the composition is skewed to acidic residues. In terms of domain architecture, ABC transporter 2 spans 1206–1440 (YETKKSCFST…FGRDYLLEIK (235 aa)). An ATP-binding site is contributed by 1239–1246 (GHNGAGKS).

Belongs to the ABC transporter superfamily. ABCA family. Widely expressed. Highly expressed in skeletal muscle, heart, brain and gastrointestinal tract.

The protein resides in the membrane. Its function is as follows. Probable transporter which may play a role in macrophage lipid transport and homeostasis. This is ATP-binding cassette sub-family A member 10 (ABCA10) from Homo sapiens (Human).